The primary structure comprises 344 residues: MAPSKQYDEGGQLQLMDAERIEEEEECFESIDKLISQGINSGDVKKLQDAGIYTCNGLMMHTKKSLTGIKGLSEAKVDKICEAAEKLLSQGFMTGSDLLIKRKSVVRITTGSQALDELLGGGIETLCITEAFGEFRSGKTQLAHTLCVSTQLPIHMHGGNGKVAYIDTEGTFRPERIVPIAERFGMDANAVLDNIIYARAYTYEHQYNLLLGLAAKMAEEPFRLLIVDSVIALFRVDFSGRGELAERQQKLAQMLSRLTKIAEEFNVAVYITNQVIADPGGGMFITDPKKPAGGHVLAHAATIRLMLRKGKGEQRVCKIFDAPNLPEGEAVFQVTSGGIMDAKD.

133-140 (GEFRSGKT) provides a ligand contact to ATP. Arginine 235 is a binding site for dsDNA. 5 residues coordinate ssDNA: arginine 235, phenylalanine 238, arginine 241, arginine 247, and arginine 315. Positions 241 and 247 each coordinate dsDNA.

Belongs to the RecA family. DMC1 subfamily. As to expression, highly expressed in spikelets. Expressed in meiotic young panicles.

It localises to the nucleus. Recombinase that may participate in meiotic recombination, specifically in homologous strand assimilation, which is required for the resolution of meiotic double-strand breaks. Exhibits DNA-dependent ATPase activity when bound to single-stranded DNA (ssDNA). Mediates renaturation of homologous complementary strands as well as assimilation of single strands into homologous supercoiled duplexes leading to D-loop formation. Binds circular single-stranded DNA (ssDNA) and circular double-stranded DNA (dsDNA) in vitro. Catalyzes DNA homologous renaturation and DNA strand exchange. The rates of these activities are dependent on the state of ATP hydrolysis. Forms helical filaments along ssDNA and dsDNA, and promotes strand exchange between ssDNA and dsDNA with long DNA substrates of several thousand base pairs. The presence of the replication protein A is not required for this activity. Seems to be required for homologous pairing and subsequent chromosome segregation during male meiosis. May be not directly required for homologous pairing during male meiosis. Required for synaptonemal complex assembly and crossover formation. Functions redundantly with DMC1A. This is Meiotic recombination protein DMC1 homolog B from Oryza sativa subsp. japonica (Rice).